We begin with the raw amino-acid sequence, 570 residues long: Peptidyl-prolyl cis-trans isomerase-like 2 (570 aa).

The U-box domain maps to 37 to 110 (KRLPFNFCSL…GDYVDPVTYK (74 aa)). Disordered stretches follow at residues 215–253 (RSER…KPTP), 428–449 (STTL…PTPD), and 469–570 (KKAE…SSWD). A compositionally biased stretch (low complexity) spans 234 to 248 (STTTSTQSKTASFQS). Residues 298-457 (QKGYARISTT…PDIRITDVTI (160 aa)) form the PPIase cyclophilin-type domain. Polar residues predominate over residues 428–446 (STTLNNLETHPVNSSTNRP). Positions 469-483 (KKAEEASGKNKKVDP) are enriched in basic and acidic residues. Composition is skewed to acidic residues over residues 484 to 497 (TEED…DDDQ) and 535 to 550 (QEED…EPEP).

It belongs to the cyclophilin-type PPIase family. PPIL2 subfamily.

It is found in the nucleus. It catalyses the reaction [protein]-peptidylproline (omega=180) = [protein]-peptidylproline (omega=0). The catalysed reaction is S-ubiquitinyl-[E2 ubiquitin-conjugating enzyme]-L-cysteine + [acceptor protein]-L-lysine = [E2 ubiquitin-conjugating enzyme]-L-cysteine + N(6)-ubiquitinyl-[acceptor protein]-L-lysine.. Its function is as follows. May catalyze the cis-trans isomerization of proline imidic peptide bonds in oligopeptides thereby assisting the folding of proteins. May also function as a chaperone, playing a role in intracellular transport of proteins. May also have a protein ubiquitin ligase activity acting as an E3 ubiquitin protein ligase or as a ubiquitin-ubiquitin ligase promoting elongation of ubiquitin chains on proteins. This chain is Peptidyl-prolyl cis-trans isomerase-like 2 (cyp8), found in Aspergillus oryzae (strain ATCC 42149 / RIB 40) (Yellow koji mold).